Reading from the N-terminus, the 539-residue chain is Dihydrolipoyllysine-residue acetyltransferase component 2 of pyruvate dehydrogenase complex, mitochondrial (539 aa).

The N-terminal 102 residues, Met1–Phe102, are a transit peptide targeting the mitochondrion. A disordered region spans residues Phe102 to Thr122. A Lipoyl-binding domain is found at His111–Val187. Lys152 is modified (N6-lipoyllysine). The disordered stretch occupies residues Phe196–Glu244. One can recognise a Peripheral subunit-binding (PSBD) domain in the interval Phe248–Leu285. Active-site residues include His512 and Asp516.

This sequence belongs to the 2-oxoacid dehydrogenase family. Requires (R)-lipoate as cofactor.

The protein resides in the mitochondrion matrix. The enzyme catalyses N(6)-[(R)-dihydrolipoyl]-L-lysyl-[protein] + acetyl-CoA = N(6)-[(R)-S(8)-acetyldihydrolipoyl]-L-lysyl-[protein] + CoA. The pyruvate dehydrogenase complex catalyzes the overall conversion of pyruvate to acetyl-CoA and CO(2). It contains multiple copies of three enzymatic components: pyruvate dehydrogenase (E1), dihydrolipoamide acetyltransferase (E2) and lipoamide dehydrogenase (E3). This chain is Dihydrolipoyllysine-residue acetyltransferase component 2 of pyruvate dehydrogenase complex, mitochondrial, found in Arabidopsis thaliana (Mouse-ear cress).